The chain runs to 180 residues: MIIVISGPPGSGKSTVAKILSKNLSLKYISAGHIFRELAEKEGLSLLELNKKAEENFEIDKKIDREIFRIASTEKNIIIESHIGGWLLKDIADITVYLNASIEIRAMRIAKRDNIPFTKAIEQIIEREESHSRRFLAYYGIDLSDLSVFDLVINTDNLQPDEISKIIEAYLNFMLAKNIH.

Residue 7-15 coordinates ATP; the sequence is GPPGSGKST.

Belongs to the cytidylate kinase family. Type 2 subfamily.

The protein resides in the cytoplasm. It carries out the reaction CMP + ATP = CDP + ADP. It catalyses the reaction dCMP + ATP = dCDP + ADP. The polypeptide is Cytidylate kinase (Sulfurisphaera tokodaii (strain DSM 16993 / JCM 10545 / NBRC 100140 / 7) (Sulfolobus tokodaii)).